A 1113-amino-acid polypeptide reads, in one-letter code: Poly(A) RNA polymerase gld-2 (1113 aa).

Disordered stretches follow at residues 1–113, 134–175, 205–266, and 445–513; these read MVMA…PKYH, RPIF…PTQP, LYRS…GQDP, and LDDE…DEST. Low complexity predominate over residues 22–52; that stretch reads SPSVDSVSRVQQQSGGFAFYNQQSNHQYQQS. The segment covering 60–106 has biased composition (polar residues); the sequence is SRDGNTGYYNNHSGNKRQTYNNQRGGRSYNHRGNSNYQQNGEYSGNQ. Residues 149–172 show a composition bias toward low complexity; sequence RRSSPPSPSALSSSTANSTSNRAP. The span at 223-233 shows a compositional bias: pro residues; sequence YKQPPPQPPST. Over residues 451 to 485 the composition is skewed to basic and acidic residues; that stretch reads GADHDKTIDENRRRIHKSQEPRIGTEEKALNELPR. Over residues 492–507 the composition is skewed to low complexity; that stretch reads SSCSSISSVSESSSPS. Mg(2+) contacts are provided by D606 and D608. Positions 780–816 constitute a PAP-associated domain; it reads TLGELLIGFLDYYANEFNYDRDAISIRQGRRVERAAL. Disordered regions lie at residues 817-854 and 966-1113; these read AVRP…GIPM and GPGH…NVSQ. Polar residues predominate over residues 972 to 994; that stretch reads YQQQSNQNLSRPQRPGSNQGYQM. 2 stretches are compositionally biased toward low complexity: residues 995–1035 and 1044–1061; these read NNNR…SRSN and QQNS…KENV. Positions 1069–1084 are enriched in basic and acidic residues; it reads VDKKQQNSNRKDDGNR.

This sequence belongs to the DNA polymerase type-B-like family. GLD2 subfamily. In terms of assembly, interacts with gld-3. Requires Mg(2+) as cofactor. Mn(2+) is required as a cofactor. As to expression, germline-specific.

The protein resides in the cytoplasm. It catalyses the reaction RNA(n) + ATP = RNA(n)-3'-adenine ribonucleotide + diphosphate. Its function is as follows. Cytoplasmic poly(A) RNA polymerase that adds successive AMP monomers to the 3'-end of specific RNAs, forming a poly(A) tail. Acts as a regulator of mitosis/meiosis required for progression through meiotic prophase during oogenesis and spermatogenesis and for promotion of the entry into meiosis from the mitotic cell cycle. May act by regulating and activating gld-1 mRNA activity in germline. Required for polyadenylation of neg-1 mRNA during embryogenesis. The chain is Poly(A) RNA polymerase gld-2 (gld-2) from Caenorhabditis elegans.